The chain runs to 504 residues: Cytochrome P450 71B7 (504 aa).

A helical transmembrane segment spans residues 1–21 (MSILLCFLCLLPVFLVSLSIL). A Glycyl lysine isopeptide (Lys-Gly) (interchain with G-Cter in ubiquitin) cross-link involves residue K82. Heme is bound at residue C446.

This sequence belongs to the cytochrome P450 family. Heme serves as cofactor. Highly expressed in rosette leaves. Also expressed in roots, leaves, flowers, and siliques.

It localises to the membrane. The sequence is that of Cytochrome P450 71B7 (CYP71B7) from Arabidopsis thaliana (Mouse-ear cress).